A 397-amino-acid polypeptide reads, in one-letter code: Probable peptidoglycan glycosyltransferase FtsW (397 aa).

The Cytoplasmic segment spans residues 1–26 (MSPRNSALERFRQHQKIPEKRWQRLA). Residues 27–47 (FPDVGLLLCWLALIVIGMVMV) traverse the membrane as a helical segment. Residues 48-69 (TSSSLSEAHVERLSTHHFAIRQ) lie on the Periplasmic side of the membrane. The chain crosses the membrane as a helical span at residues 70–90 (GIFYVGSSIFAYIAFMLGTNF). At 91–96 (YREKAK) the chain is on the cytoplasmic side. The helical transmembrane segment at 97–117 (FILGLAFLGLLLVYAPGIGVV) threads the bilayer. Over 118-126 (VNGSRRWLN) the chain is Periplasmic. The chain crosses the membrane as a helical span at residues 127–147 (LGVINLQVGEFAKLAVFIFTA). The Cytoplasmic segment spans residues 148 to 159 (AYLQHHTQRLDH). Residues 160–180 (SWQPIIGLLAVTACFALMFYL) form a helical membrane-spanning segment. The Periplasmic portion of the chain corresponds to 181–185 (QPDFG). A helical transmembrane segment spans residues 186–206 (TMVVIVATVLGMLFLSGVSIW). Arg-207 is a topological domain (cytoplasmic). The helical transmembrane segment at 208-228 (LLLLGVLIAPAMVWVLISESY) threads the bilayer. Residues 229-294 (RLRRLTTFIN…IFSIIAEETG (66 aa)) are Periplasmic-facing. A helical transmembrane segment spans residues 295–315 (LVGALIVMAILMILVWRAFAI). At 316–328 (GYLADRMRKRFSS) the chain is on the cytoplasmic side. The chain crosses the membrane as a helical span at residues 329 to 349 (LLAYGIGLWLGLQSLINIGVT). Residues 350–359 (TGALPTKGLT) are Periplasmic-facing. The chain crosses the membrane as a helical span at residues 360 to 380 (LPLISYGGSSILMTSIALAIL). Over 381 to 397 (ARIDAESRFIARLEGKI) the chain is Cytoplasmic.

The protein belongs to the SEDS family. FtsW subfamily.

Its subcellular location is the cell inner membrane. The catalysed reaction is [GlcNAc-(1-&gt;4)-Mur2Ac(oyl-L-Ala-gamma-D-Glu-L-Lys-D-Ala-D-Ala)](n)-di-trans,octa-cis-undecaprenyl diphosphate + beta-D-GlcNAc-(1-&gt;4)-Mur2Ac(oyl-L-Ala-gamma-D-Glu-L-Lys-D-Ala-D-Ala)-di-trans,octa-cis-undecaprenyl diphosphate = [GlcNAc-(1-&gt;4)-Mur2Ac(oyl-L-Ala-gamma-D-Glu-L-Lys-D-Ala-D-Ala)](n+1)-di-trans,octa-cis-undecaprenyl diphosphate + di-trans,octa-cis-undecaprenyl diphosphate + H(+). It participates in cell wall biogenesis; peptidoglycan biosynthesis. Peptidoglycan polymerase that is essential for cell division. The polypeptide is Probable peptidoglycan glycosyltransferase FtsW (Dichelobacter nodosus (strain VCS1703A)).